The sequence spans 265 residues: Adenosylcobinamide-GDP ribazoletransferase (265 aa).

4 consecutive transmembrane segments (helical) span residues 51–71, 72–92, 121–140, and 203–223; these read LVGV…QLIF, PDSV…GAFH, IGTY…FVLW, and VASL…LFAF.

It belongs to the CobS family. Mg(2+) is required as a cofactor.

The protein resides in the cell inner membrane. The catalysed reaction is alpha-ribazole + adenosylcob(III)inamide-GDP = adenosylcob(III)alamin + GMP + H(+). It catalyses the reaction alpha-ribazole 5'-phosphate + adenosylcob(III)inamide-GDP = adenosylcob(III)alamin 5'-phosphate + GMP + H(+). It functions in the pathway cofactor biosynthesis; adenosylcobalamin biosynthesis; adenosylcobalamin from cob(II)yrinate a,c-diamide: step 7/7. In terms of biological role, joins adenosylcobinamide-GDP and alpha-ribazole to generate adenosylcobalamin (Ado-cobalamin). Also synthesizes adenosylcobalamin 5'-phosphate from adenosylcobinamide-GDP and alpha-ribazole 5'-phosphate. This Vibrio parahaemolyticus serotype O3:K6 (strain RIMD 2210633) protein is Adenosylcobinamide-GDP ribazoletransferase.